A 128-amino-acid chain; its full sequence is Fluoride-specific ion channel FluC (128 aa).

Helical transmembrane passes span 4-24, 39-59, 71-91, and 99-119; these read LLLA…RYLI, GTLI…EFSM, FLTT…YETI, and MTLG…FVVI. Residues glycine 78 and threonine 81 each contribute to the Na(+) site.

The protein belongs to the fluoride channel Fluc/FEX (TC 1.A.43) family.

It localises to the cell membrane. The catalysed reaction is fluoride(in) = fluoride(out). Na(+) is not transported, but it plays an essential structural role and its presence is essential for fluoride channel function. Functionally, fluoride-specific ion channel. Important for reducing fluoride concentration in the cell, thus reducing its toxicity. The sequence is that of Fluoride-specific ion channel FluC from Clostridium perfringens (strain 13 / Type A).